The primary structure comprises 352 residues: Protein RecA (352 aa).

65–72 (GPESSGKT) is a binding site for ATP.

The protein belongs to the RecA family.

Its subcellular location is the cytoplasm. Functionally, can catalyze the hydrolysis of ATP in the presence of single-stranded DNA, the ATP-dependent uptake of single-stranded DNA by duplex DNA, and the ATP-dependent hybridization of homologous single-stranded DNAs. It interacts with LexA causing its activation and leading to its autocatalytic cleavage. Plays a functional role in the DNA rearrangement associated with the phenotypic switching from a pathogenic smooth to a nonpathogenic rough form in this bacterium. The polypeptide is Protein RecA (Pseudomonas tolaasii).